The primary structure comprises 304 residues: MHLPIFLDTDPGIDDAVAIAAAIFAPELDLQLMTTVAGNVSVEKTTRNALQLLHFWNAEIPLAQGAAVPLVRAPRDAASVHGESGMAGYDFVEHNRKPLGIPAFLAIRDALMRAPEPVTLVAIGPLTNIALLLSQCPECKPYIRRLVIMGGSAGRGNCTPNAEFNIAADPEAAACVFRSGIEIVMSGLDVTNQAILTPDYLATLPELNRTGKMLHALFSHYRSGSMQSGLRMHDLCAIAWLVRPELFTLKPCFVAVETQGEFTSGTTVVDIDGCLGKPANVKVALDLDVKGFQQWVAEVLALAS.

Residue His233 is part of the active site.

Belongs to the IUNH family. RihC subfamily.

Its function is as follows. Hydrolyzes both purine and pyrimidine ribonucleosides with a broad-substrate specificity. This chain is Non-specific ribonucleoside hydrolase RihC, found in Shigella boydii serotype 4 (strain Sb227).